A 279-amino-acid chain; its full sequence is PHO85 cyclin-1 (279 aa).

One can recognise a Cyclin N-terminal domain in the interval 19-152 (DIIKFLTDTT…LLQLLNWDLR (134 aa)). The required for degradation by DMA1 stretch occupies residues 29–36 (LRVVPSSN). Threonine 39 bears the Phosphothreonine; by PHO85 mark. The residue at position 43 (serine 43) is a Phosphoserine; by PHO85. Residues lysine 82 and lysine 121 each participate in a glycyl lysine isopeptide (Lys-Gly) (interchain with G-Cter in ubiquitin) cross-link.

Belongs to the cyclin family. PCL1,2 subfamily. As to quaternary structure, forms a cyclin-CDK complex with PHO85. Interacts with HMS1, NCP1 and NPA3. Interacts with DMA1. Phosphorylated by PHO85; necessary for interaction with DMA1 and subsequent degradation. In terms of processing, ubiquitinated by E3 ubiquitin ligase DMA1 in response to nutrient condition; this targets PCL1 for destruction.

It localises to the cytoplasm. The protein localises to the nucleus. In terms of biological role, G1/S-specific cyclin partner of the cyclin-dependent kinase (CDK) PHO85. Essential for the control of the cell cycle at the G1/S (start) transition. The PCL1-PHO85 cyclin-CDK holoenzyme is involved in phosphorylation of the CDK inhibitor (CKI) SIC1, which is required for its ubiquitination and degradation, releasing repression of b-type cyclins and promoting exit from mitosis. Together with cyclin PCL2, positively controls degradation of sphingoid long chain base kinase LCB4. PCL1-PHO85 phosphorylates LCB4, which is required for its ubiquitination and degradation. PCL1-PHO85 also phosphorylates HMS1, NCP1 and NPA3, which may all have a role in mitotic exit. In Saccharomyces cerevisiae (strain ATCC 204508 / S288c) (Baker's yeast), this protein is PHO85 cyclin-1.